Consider the following 245-residue polypeptide: MASPSRRLQTKPVITCFKSVLLIYTFIFWITGVILLAVGIWGKVSLENYFSLLNEKATNVPFVLIGTGTVIILLGTFGCFATCRASAWMLKLYAMFLTLIFLVELVAAIIGFVFRHEIKNSLKNNYEKALKQYNATGDYRSDAVDKIQSMLHCCGVTNYRDWKDTNYYSEKGFPESCCKLEDCSPQRDADKVNNEGCFIMVMTIIESEMGVVAGISFGVACFQLIGIFLAYCLSRAITNNQYEIV.

The Cytoplasmic portion of the chain corresponds to Met1–Ser19. Residues Val20–Ile40 form a helical membrane-spanning segment. Topologically, residues Trp41–Asn59 are extracellular. Residues Val60 to Phe80 form a helical membrane-spanning segment. The Cytoplasmic segment spans residues Ala81–Tyr93. A helical transmembrane segment spans residues Ala94–Phe114. At Arg115–Glu208 the chain is on the extracellular side. Asn134 carries N-linked (GlcNAc...) asparagine glycosylation. Residues Met209–Leu229 form a helical membrane-spanning segment. At Ala230–Val245 the chain is on the cytoplasmic side.

Belongs to the tetraspanin (TM4SF) family.

Its subcellular location is the membrane. The sequence is that of Tetraspanin-6 (TSPAN6) from Bos taurus (Bovine).